Here is a 287-residue protein sequence, read N- to C-terminus: Putative daunorubicin C-13 ketoreductase DnrU (287 aa).

24-30 (GATSGIG) provides a ligand contact to NADP(+). Ser-149 contributes to the substrate binding site. Tyr-175 (proton acceptor) is an active-site residue.

This sequence belongs to the short-chain dehydrogenases/reductases (SDR) family.

Functionally, could reduce the 13-carbonyl of daunorubicin to produce (13S)-13-dihydrodaunorubicin. Could also be able to reduce the 13-carbonyl of doxorubicin. The sequence is that of Putative daunorubicin C-13 ketoreductase DnrU from Streptomyces sp. (strain C5).